A 239-amino-acid chain; its full sequence is Pimeloyl-[acyl-carrier protein] methyl ester esterase (239 aa).

Substrate-binding positions include W20, 77–78, and 138–142; these read SM and FISLQ. Catalysis depends on S77, which acts as the Nucleophile. Catalysis depends on residues D192 and H220. H220 contacts substrate.

The protein belongs to the AB hydrolase superfamily. Carboxylesterase BioH family. In terms of assembly, monomer.

The protein localises to the cytoplasm. It catalyses the reaction 6-carboxyhexanoyl-[ACP] methyl ester + H2O = 6-carboxyhexanoyl-[ACP] + methanol + H(+). The protein operates within cofactor biosynthesis; biotin biosynthesis. In terms of biological role, the physiological role of BioH is to remove the methyl group introduced by BioC when the pimeloyl moiety is complete. It allows to synthesize pimeloyl-ACP via the fatty acid synthetic pathway through the hydrolysis of the ester bonds of pimeloyl-ACP esters. In Legionella pneumophila (strain Corby), this protein is Pimeloyl-[acyl-carrier protein] methyl ester esterase.